The chain runs to 506 residues: D-alanine--D-alanyl carrier protein ligase (506 aa).

152–153 (TS) provides a ligand contact to ATP. Aspartate 197 contacts D-alanine. 292 to 297 (NTYGPT) contacts ATP. D-alanine is bound at residue valine 301. ATP is bound by residues aspartate 383, 395–398 (YRGR), and lysine 494. Lysine 494 is a D-alanine binding site.

Belongs to the ATP-dependent AMP-binding enzyme family. DltA subfamily.

The protein localises to the cytoplasm. The catalysed reaction is holo-[D-alanyl-carrier protein] + D-alanine + ATP = D-alanyl-[D-alanyl-carrier protein] + AMP + diphosphate. The protein operates within cell wall biogenesis; lipoteichoic acid biosynthesis. Its function is as follows. Catalyzes the first step in the D-alanylation of lipoteichoic acid (LTA), the activation of D-alanine and its transfer onto the D-alanyl carrier protein (Dcp) DltC. In an ATP-dependent two-step reaction, forms a high energy D-alanyl-AMP intermediate, followed by transfer of the D-alanyl residue as a thiol ester to the phosphopantheinyl prosthetic group of the Dcp. D-alanylation of LTA plays an important role in modulating the properties of the cell wall in Gram-positive bacteria, influencing the net charge of the cell wall. The polypeptide is D-alanine--D-alanyl carrier protein ligase (Lacticaseibacillus rhamnosus (Lactobacillus rhamnosus)).